Reading from the N-terminus, the 685-residue chain is MPAYLLLLACNVLLVLGAHVQRELVLTWEEGAPNGQSRQMIKTNGQFPSPTLIFDEGDDVEIVVRNYMHENTTIHWHGILMQDTPWSDGVPGLSQKPIEPGESYVYRFTAYPPGQYWYHSHSRATLLDGLYGALFIRRKPGTAGPWAMISEDPEDIAAMERASNNPHIMMLSDWDYYNSTQYKEADANSRLQIFCVDSILLNGKGSVYCPGHQWLIDKQIPFMHKSWPNDTITDKGCFPFVPSTEGPWLADGNVSAIPPGLQEGCVPYSGPTEAIEVDPADRWASVNWIGGSTFKTLQPTIDEHEMWIYEVDGHYIEPRRADTFLIWAGERYSAMIRLDKKPMDYSIRVPDGGYSQMIAAFGILRYKNGDPNARQKPDRFGVTTISKPYFDYNAWPMRDAVFLDKLDLPPWPRKVPAAHGDDMHVLYLGKANSTWEFTLSGKKKYPPDRSAYEPLLYNVNSEQAHDDDLIIRTQNGTWQDIVLQVGHSPLWPVDFPHAVHKHANKYWRIGGGQGLWNYSSVEEAMADQPESFNMVNPPYRDTFLTEFTGAMWVVLRYQVTSPGAWLLHCHFEMHLDNGMAMAILDGVDKWPHVPPEYTQGFHGFREHELPGPAGFWGLVSKILRPESLVWAGGAAVVLLSLFIGGLWRLWQRRMQGTYYVLSQEDERDRFSMDKEAWKSEETKRM.

The N-terminal stretch at 1 to 17 (MPAYLLLLACNVLLVLG) is a signal peptide. Plastocyanin-like domains lie at 26-139 (LTWE…IRRK) and 168-368 (IMML…RYKN). N-linked (GlcNAc...) asparagine glycosylation is present at N71. Residues H75, H77, H119, and H121 each contribute to the Cu cation site. 5 N-linked (GlcNAc...) asparagine glycosylation sites follow: N178, N229, N253, N432, and N475. One can recognise a Plastocyanin-like 3 domain in the interval 466–585 (DDDLIIRTQN…DNGMAMAILD (120 aa)). H500 is a binding site for Cu cation. N-linked (GlcNAc...) asparagine glycosylation is present at N517. The chain crosses the membrane as a helical span at residues 627-647 (SLVWAGGAAVVLLSLFIGGLW).

The protein belongs to the multicopper oxidase family.

The protein localises to the membrane. The catalysed reaction is 4 semiviriditoxin + O2 = 2 (M)-viriditoxin + 2 H2O. The protein operates within secondary metabolite biosynthesis. Its function is as follows. Multicopper oxidase; part of the gene cluster that mediates the biosynthesis of viriditoxin, one of the 'classical' secondary metabolites produced by fungi and that has antibacterial activity. The first step is performed by the polyketide synthase VdtA which condenses one acetyl-CoA and 6 malonyl-CoA units to form the heptaketide monomer backbone of viriditoxin. The product of VdtA is then O-methylated on C7 by the O-methyltransferase VdtC. The O-methyl group is important for the stereoselective coupling of the monomers at the final step of viriditoxin biosynthesis. The short-chain dehydrogenase/reductase VdtF then acts as a stereospecific reductase converting the pyrone to dihydropyrone via the reduction of the C3-C4 double bond. The FAD-binding monooxygenase VdtE then converts the ketone group into a methyl-ester group to yield semi-viriditoxin. Finally, the laccase VdtB is involved in dimerization of 2 semi-viriditoxin molecules to yield the final viriditoxin. VdtB is responsible for the regioselective 6,6'-coupling of semi-viriditoxin, which yields (M)-viriditoxin and (P)-viriditoxin at a ratio of 1:2. The non-catalytic carboxylesterase-like protein VdtD affects the stereochemistical outcome of the coupling. The highly reducing polyketide synthase VdtX is not involved in viriditoxin synthesis, but might possibly play a role in the production of additional metabolites not identified yet. The protein is Multicopper oxidase VdtB of Byssochlamys spectabilis (Paecilomyces variotii).